The primary structure comprises 230 residues: Probable fimbrial chaperone SfmC (230 aa).

The N-terminal stretch at 1–23 (MMTKIKLLMLIIFYLIISASAHA) is a signal peptide.

It belongs to the periplasmic pilus chaperone family.

The protein localises to the periplasm. Functionally, part of the sfmACDHF fimbrial operon. Could contribute to adhesion to various surfaces in specific environmental niches. Increases adhesion to eukaryotic T24 bladder epithelial cells in the absence of fim genes. The sequence is that of Probable fimbrial chaperone SfmC (sfmC) from Escherichia coli (strain K12).